A 365-amino-acid chain; its full sequence is MIKFLSALILLLVTTAAQAERIRDLTSVQGVRQNSLIGYGLVVGLDGTGDQTTQTPFTTQTLNNMLSQLGITVPTGTNMQLKNVAAVMVTASLPPFGRQGQTIDVVVSSMGNAKSLRGGTLLMTPLKGVDSQVYALAQGNILVGGAGASAGGSSVQVNQLNGGRITNGAVIERELPSQFGVGNTLNLQLNDEDFSMAQQIADTINRVRGYGSATVLDARTIQVRVPSGNSSQVRFLADIQNMQVNVTPQDAKVVINSRTGSVVMNREVTLDSCAVAQGNLSVTVNRQANVSQPDTPFGGGQTVVTPQTQIDLRQSGGSLQSVRSSASLNNVVRSLNALGATPMDLMSILQSMQSAGCLRAKLEII.

The first 19 residues, 1 to 19, serve as a signal peptide directing secretion; it reads MIKFLSALILLLVTTAAQA.

The protein belongs to the FlgI family. As to quaternary structure, the basal body constitutes a major portion of the flagellar organelle and consists of four rings (L,P,S, and M) mounted on a central rod.

Its subcellular location is the periplasm. It localises to the bacterial flagellum basal body. Its function is as follows. Assembles around the rod to form the L-ring and probably protects the motor/basal body from shearing forces during rotation. This is Flagellar P-ring protein from Shigella dysenteriae serotype 1 (strain Sd197).